The sequence spans 94 residues: MKFVSLASLGFALVAALGAVATPVEADSLTAGGLDARDESAVLATYNGKCYKKDNICKYKAQSGKTAICKCYVKKCPRDGAKCEFDSYKGKCYC.

Residues 1 to 21 (MKFVSLASLGFALVAALGAVA) form the signal peptide. A propeptide spanning residues 22–43 (TPVEADSLTAGGLDARDESAVL) is cleaved from the precursor. Disulfide bonds link Cys50-Cys76, Cys57-Cys83, Cys69-Cys71, and Cys92-Cys94.

This sequence belongs to the antifungal protein pafB family.

The protein resides in the secreted. The protein localises to the host cytoplasm. Antifungal protein that acts as an inhibitor of growth of a variety of fungal species. This is Antifungal protein (afp) from Aspergillus giganteus.